The sequence spans 155 residues: Small ribosomal subunit protein uS7 (155 aa).

The protein belongs to the universal ribosomal protein uS7 family. As to quaternary structure, part of the 30S ribosomal subunit. Contacts proteins S9 and S11.

In terms of biological role, one of the primary rRNA binding proteins, it binds directly to 16S rRNA where it nucleates assembly of the head domain of the 30S subunit. Is located at the subunit interface close to the decoding center, probably blocks exit of the E-site tRNA. The sequence is that of Small ribosomal subunit protein uS7 from Chlorobium phaeovibrioides (strain DSM 265 / 1930) (Prosthecochloris vibrioformis (strain DSM 265)).